We begin with the raw amino-acid sequence, 1322 residues long: Phosphoribosylformylglycinamidine synthase (1322 aa).

Residues 300–311 (GASTGAGGEIRD) and alanine 702 contribute to the ATP site. Residues aspartate 703, glutamate 742, asparagine 746, and aspartate 915 each contribute to the Mg(2+) site. Residue serine 917 participates in ATP binding. Positions 1073–1322 (VAILREQGIN…LFRNARAWVG (250 aa)) constitute a Glutamine amidotransferase type-1 domain. Residue cysteine 1166 is the Nucleophile of the active site. Residues histidine 1287 and glutamate 1289 contribute to the active site.

The protein in the N-terminal section; belongs to the FGAMS family. In terms of assembly, monomer.

The protein resides in the cytoplasm. It catalyses the reaction N(2)-formyl-N(1)-(5-phospho-beta-D-ribosyl)glycinamide + L-glutamine + ATP + H2O = 2-formamido-N(1)-(5-O-phospho-beta-D-ribosyl)acetamidine + L-glutamate + ADP + phosphate + H(+). It functions in the pathway purine metabolism; IMP biosynthesis via de novo pathway; 5-amino-1-(5-phospho-D-ribosyl)imidazole from N(2)-formyl-N(1)-(5-phospho-D-ribosyl)glycinamide: step 1/2. Functionally, phosphoribosylformylglycinamidine synthase involved in the purines biosynthetic pathway. Catalyzes the ATP-dependent conversion of formylglycinamide ribonucleotide (FGAR) and glutamine to yield formylglycinamidine ribonucleotide (FGAM) and glutamate. The sequence is that of Phosphoribosylformylglycinamidine synthase from Xylella fastidiosa (strain Temecula1 / ATCC 700964).